Consider the following 550-residue polypeptide: MGDSSELNVRRSVRDLQAEYDRGNRKPLEDLIRAWKGIQELPPDDKRSFFILGGYHGEPFDYRNAVDALPPDDIYTYWGGWCNHGNVLFPTWHRIYILKLEEALQSIVPGVTLPFWDETSEETVKKGIPDVLTREYFELDGENIKNPLYSYTLPLSLSDNVPGDNKAYEKPAGYETVRYPLSGLVGTPEARAATAKHNAKYPNPIENTQLLNKNIIAWLHGSGKDEEGPTTTDPNPKGRGVKWMYEKCLSAPNYTVFSNTTSAGQWNLDHPAKSVVALEQPHNDVHLAVGGFDIPGQGESGQVADANGDMGENNTAALDPIFFFHHCNVDRMFWLWQKQNGFINKLEVITGYYGTNSSDSQGPTPGIPPGTPLDLNTPLNPFIKDEFGNPFTSMDCINIEEQLGYTYGPGSLDEVPKPEPITGGSTKKLTVRGINRGLFDGSFVIRAYASVPDAQGQLTEYYLGDHAVLSRRNVVKCANCLTHLEVIAHFPLDTLSADLVDKAEYWITIQHRGHSKRMKVDKDTGQSEKALLAQRAELPEKLKYSISVTD.

Cu cation-binding residues include histidine 56, histidine 84, histidine 93, histidine 282, histidine 286, and histidine 326.

It belongs to the tyrosinase family. It depends on Cu(2+) as a cofactor.

The catalysed reaction is L-tyrosine + O2 = L-dopaquinone + H2O. It carries out the reaction 2 L-tyrosine + O2 = 2 L-dopa. The enzyme catalyses 2 L-dopa + O2 = 2 L-dopaquinone + 2 H2O. Its function is as follows. Copper-containing oxidase that catalyzes the conversion of L-tyrosine to L-dopa and then to L-dopaquinone. Can use various phenols such as p-coumaric acid, phenol, pyrocatechol, syringol or pyrogallol. Accepts several of the constituents of lignin and potentially participates in lignin functionalization. In Hahella sp. (strain CCB-MM4), this protein is Tyrosinase HcTyr2.